The following is a 505-amino-acid chain: MAETDEADVQTKKSKTLIIRHLPRELSRDEKEDLLKYFGASSVRVLSEKGPLKHMAFATFSSETSASKALNRLHQLRILGRTLVVEFAKDQDSASILKDPPVSDRTAAAVAEKEKKEKQQPSVPLMDTSIAPSLGLKFQTNPTLKYLYPPPSSGILTNITHTLLSVPKFYVQVLHLMNKMNLPSPFRPVTAPPPMFEMPSGPLPPPFPPENPPLPEHDESGSEEESEYESEDEEERERMIRLMGLVNQPCKRPLRTKTSSKRKKPKLKDLLFIPKPDSHGPSGPVLQPADVFEQPHALGQKKIEFHISSEVSAILEGPGQNQKLPFADATEDTPDMEVSAQETTEGFGKIYPSAQVPRQEEEQEEDEDIPSEFISRRELERGRLSRDEIKKLSVFKKYEPGEPTCRLYVKNVAKHVEEKDLKFIYGRYIDISSEEERNMFDIVLMKEGRMKGQAFIGLPSERSAQKALKETNGYVLKDKPLVVQFARSAKPKQESADPKKGGRKH.

Residues Lys15–Asp90 enclose the RRM 1 domain. 4 disordered regions span residues Ile96–Val123, Pro193–Arg236, Ala354–Ile374, and Ala486–His505. Residues Pro193 to Leu214 show a composition bias toward pro residues. Composition is skewed to acidic residues over residues Gly221–Glu235 and Glu361–Pro370. An RRM 2 domain is found at Cys405–Ser488. A compositionally biased stretch (basic and acidic residues) spans Pro491 to His505.

As to quaternary structure, component of the U11/U12 snRNPs that are part of the U12-type spliceosome.

It localises to the nucleus. Functionally, participates in pre-mRNA U12-dependent splicing, performed by the minor spliceosome which removes U12-type introns. U12-type introns comprise less than 1% of all non-coding sequences. The chain is RNA-binding region-containing protein 3 from Danio rerio (Zebrafish).